The sequence spans 477 residues: Mitochondrial adenyl nucleotide antiporter SLC25A24 (477 aa).

The segment at M1–D173 is regulatory N-terminal domain. The Mitochondrial intermembrane portion of the chain corresponds to M1–Q197. EF-hand domains follow at residues E19 to P54, E61 to K85, D86 to T121, and I122 to T157. Residues D32, N34, D36, V38, E43, D68, N70, D72, K74, E79, D99, N101, D103, K105, E110, D135, D137, T139, T141, and E146 each coordinate Ca(2+). The interval I159–H168 is linker region. Positions I174–K477 are C-terminal transmembrane transporter domain. 3 Solcar repeats span residues G192–L278, I286–H371, and P383–T471. Residues L198 to L215 form a helical membrane-spanning segment. Topologically, residues D216–R252 are mitochondrial matrix. Residues G253–Y272 form a helical membrane-spanning segment. The Mitochondrial intermembrane portion of the chain corresponds to E273–G295. A helical transmembrane segment spans residues S296–M309. Residues E310–K345 are Mitochondrial matrix-facing. An N6-acetyllysine; alternate modification is found at K320. K320 carries the N6-succinyllysine; alternate modification. An N6-acetyllysine modification is found at K336. A helical transmembrane segment spans residues G346–Y365. Over E366–L388 the chain is Mitochondrial intermembrane. A helical transmembrane segment spans residues L389 to L406. At A407–R445 the chain is on the mitochondrial matrix side. An N6-acetyllysine; alternate modification is found at K437. Position 437 is an N6-succinyllysine; alternate (K437). The chain crosses the membrane as a helical span at residues G446–Y465. At E466–K477 the chain is on the mitochondrial intermembrane side.

The protein belongs to the mitochondrial carrier (TC 2.A.29) family. As to quaternary structure, monomer.

Its subcellular location is the mitochondrion inner membrane. It carries out the reaction Mg(2+)(out) + phosphate(in) + ATP(out) = Mg(2+)(in) + phosphate(out) + ATP(in). The catalysed reaction is ADP(out) + phosphate(in) + H(+)(out) = ADP(in) + phosphate(out) + H(+)(in). It catalyses the reaction AMP(out) + phosphate(in) = AMP(in) + phosphate(out). The enzyme catalyses phosphate(in) + ATP(out) + 2 H(+)(out) = phosphate(out) + ATP(in) + 2 H(+)(in). It carries out the reaction dADP(in) + ADP(out) = dADP(out) + ADP(in). The catalysed reaction is Mg(2+)(in) + ADP(out) + ATP(in) + H(+)(out) = Mg(2+)(out) + ADP(in) + ATP(out) + H(+)(in). It catalyses the reaction ADP(out) + diphosphate(in) = ADP(in) + diphosphate(out). The enzyme catalyses dAMP(in) + ADP(out) + H(+)(out) = dAMP(out) + ADP(in) + H(+)(in). It carries out the reaction 3'-AMP(in) + ADP(out) + H(+)(out) = 3'-AMP(out) + ADP(in) + H(+)(in). The catalysed reaction is dAMP(out) + phosphate(in) = dAMP(in) + phosphate(out). It catalyses the reaction 3'-AMP(out) + phosphate(in) = 3'-AMP(in) + phosphate(out). The enzyme catalyses dADP(out) + phosphate(in) + H(+)(out) = dADP(in) + phosphate(out) + H(+)(in). Its activity is regulated as follows. Activated by an increase in cytosolic calcium levels that induce a conformational change of the N-terminal regulatory domain, uncapping the channel and allowing transport. Inhibited by bathophenanthroline, mersalyl, p-hydroxymercuribenzoate, bromcresol purple and tannic acid. Functionally, electroneutral antiporter that mediates the transport of adenyl nucleotides through the inner mitochondrial membrane. Originally identified as an ATP-magnesium/inorganic phosphate antiporter, it also acts as a broad specificity adenyl nucleotide antiporter. By regulating the mitochondrial matrix adenyl nucleotide pool could adapt to changing cellular energetic demands and indirectly regulate adenyl nucleotide-dependent metabolic pathways. In vitro, a low activity is also observed with guanyl and pyrimidine nucleotides. May play a role in protecting cells against oxidative stress-induced cell death, by buffering calcium levels in the mitochondrial matrix through the formation of calcium-phosphate precipitates. The sequence is that of Mitochondrial adenyl nucleotide antiporter SLC25A24 (SLC25A24) from Bos taurus (Bovine).